A 502-amino-acid chain; its full sequence is ATP synthase subunit alpha (502 aa).

Residue 169-176 coordinates ATP; the sequence is GDRQTGKT.

Belongs to the ATPase alpha/beta chains family. F-type ATPases have 2 components, CF(1) - the catalytic core - and CF(0) - the membrane proton channel. CF(1) has five subunits: alpha(3), beta(3), gamma(1), delta(1), epsilon(1). CF(0) has three main subunits: a(1), b(2) and c(9-12). The alpha and beta chains form an alternating ring which encloses part of the gamma chain. CF(1) is attached to CF(0) by a central stalk formed by the gamma and epsilon chains, while a peripheral stalk is formed by the delta and b chains.

The protein localises to the cell membrane. The catalysed reaction is ATP + H2O + 4 H(+)(in) = ADP + phosphate + 5 H(+)(out). In terms of biological role, produces ATP from ADP in the presence of a proton gradient across the membrane. The alpha chain is a regulatory subunit. This chain is ATP synthase subunit alpha, found in Exiguobacterium sp. (strain ATCC BAA-1283 / AT1b).